The chain runs to 572 residues: Proline--tRNA ligase (572 aa).

It belongs to the class-II aminoacyl-tRNA synthetase family. ProS type 1 subfamily. In terms of assembly, homodimer.

The protein resides in the cytoplasm. It carries out the reaction tRNA(Pro) + L-proline + ATP = L-prolyl-tRNA(Pro) + AMP + diphosphate. Catalyzes the attachment of proline to tRNA(Pro) in a two-step reaction: proline is first activated by ATP to form Pro-AMP and then transferred to the acceptor end of tRNA(Pro). As ProRS can inadvertently accommodate and process non-cognate amino acids such as alanine and cysteine, to avoid such errors it has two additional distinct editing activities against alanine. One activity is designated as 'pretransfer' editing and involves the tRNA(Pro)-independent hydrolysis of activated Ala-AMP. The other activity is designated 'posttransfer' editing and involves deacylation of mischarged Ala-tRNA(Pro). The misacylated Cys-tRNA(Pro) is not edited by ProRS. The chain is Proline--tRNA ligase from Enterobacter sp. (strain 638).